An 81-amino-acid chain; its full sequence is MEHKVTCVLAMVLMLALSSLAQNQEETCAVIPRERINCGFPGVTAQQCKEKGCCFDDSVRGFPWCFRPLVIENQQEEECPF.

The first 21 residues, 1 to 21 (MEHKVTCVLAMVLMLALSSLA), serve as a signal peptide directing secretion. The residue at position 22 (Gln-22) is a Pyrrolidone carboxylic acid. Residues 26 to 69 (ETCAVIPRERINCGFPGVTAQQCKEKGCCFDDSVRGFPWCFRPL) enclose the P-type domain. Intrachain disulfides connect Cys-28-Cys-54, Cys-38-Cys-53, and Cys-48-Cys-65.

Its subcellular location is the secreted. In terms of biological role, stabilizer of the mucous gel overlying the gastrointestinal mucosa that provides a physical barrier against various noxious agents. The sequence is that of Trefoil factor 1 (Tff1) from Rattus norvegicus (Rat).